A 122-amino-acid chain; its full sequence is LYR motif-containing protein 1 (122 aa).

The protein belongs to the complex I LYR family.

The chain is LYR motif-containing protein 1 (lyrm1) from Xenopus laevis (African clawed frog).